The primary structure comprises 541 residues: Membrane protein insertase YidC (541 aa).

6 helical membrane-spanning segments follow: residues 6 to 26 (NILL…WQAD), 325 to 345 (LVVD…LLMF), 349 to 369 (FVGN…GLLF), 420 to 440 (GGCL…WVLL), 457 to 477 (LSVQ…MFVM), and 500 to 520 (VIFT…WLVG).

This sequence belongs to the OXA1/ALB3/YidC family. Type 1 subfamily. In terms of assembly, interacts with the Sec translocase complex via SecD. Specifically interacts with transmembrane segments of nascent integral membrane proteins during membrane integration.

It is found in the cell inner membrane. Its function is as follows. Required for the insertion and/or proper folding and/or complex formation of integral membrane proteins into the membrane. Involved in integration of membrane proteins that insert both dependently and independently of the Sec translocase complex, as well as at least some lipoproteins. Aids folding of multispanning membrane proteins. This is Membrane protein insertase YidC from Shewanella baltica (strain OS223).